The chain runs to 167 residues: Crossover junction endodeoxyribonuclease RuvC (167 aa).

Residues Asp-11, Glu-71, and Asp-143 contribute to the active site. Mg(2+) is bound by residues Asp-11, Glu-71, and Asp-143.

It belongs to the RuvC family. In terms of assembly, homodimer which binds Holliday junction (HJ) DNA. The HJ becomes 2-fold symmetrical on binding to RuvC with unstacked arms; it has a different conformation from HJ DNA in complex with RuvA. In the full resolvosome a probable DNA-RuvA(4)-RuvB(12)-RuvC(2) complex forms which resolves the HJ. Requires Mg(2+) as cofactor.

Its subcellular location is the cytoplasm. It carries out the reaction Endonucleolytic cleavage at a junction such as a reciprocal single-stranded crossover between two homologous DNA duplexes (Holliday junction).. Its function is as follows. The RuvA-RuvB-RuvC complex processes Holliday junction (HJ) DNA during genetic recombination and DNA repair. Endonuclease that resolves HJ intermediates. Cleaves cruciform DNA by making single-stranded nicks across the HJ at symmetrical positions within the homologous arms, yielding a 5'-phosphate and a 3'-hydroxyl group; requires a central core of homology in the junction. The consensus cleavage sequence is 5'-(A/T)TT(C/G)-3'. Cleavage occurs on the 3'-side of the TT dinucleotide at the point of strand exchange. HJ branch migration catalyzed by RuvA-RuvB allows RuvC to scan DNA until it finds its consensus sequence, where it cleaves and resolves the cruciform DNA. The polypeptide is Crossover junction endodeoxyribonuclease RuvC (Hyphomonas neptunium (strain ATCC 15444)).